A 277-amino-acid chain; its full sequence is Orotidine 5'-phosphate decarboxylase (277 aa).

Substrate is bound by residues D40, 62-64 (KTH), 93-102 (DRKFIDIGNT), Y229, and R247. The Proton donor role is filled by K95.

Belongs to the OMP decarboxylase family.

It catalyses the reaction orotidine 5'-phosphate + H(+) = UMP + CO2. It functions in the pathway pyrimidine metabolism; UMP biosynthesis via de novo pathway; UMP from orotate: step 2/2. In Aspergillus awamori (Black koji mold), this protein is Orotidine 5'-phosphate decarboxylase (pyrG).